Reading from the N-terminus, the 301-residue chain is Probable alpha-L-glutamate ligase (301 aa).

The region spanning 104–287 (LQLLSRRGIG…VAGMIIEHLE (184 aa)) is the ATP-grasp domain. ATP is bound by residues Lys-141, 178–179 (EY), Asp-187, and 211–213 (RSN). Mg(2+) contacts are provided by Asp-248, Glu-260, and Asn-262. 3 residues coordinate Mn(2+): Asp-248, Glu-260, and Asn-262.

It belongs to the RimK family. The cofactor is Mg(2+). Requires Mn(2+) as cofactor.

The chain is Probable alpha-L-glutamate ligase from Pseudomonas entomophila (strain L48).